Here is a 77-residue protein sequence, read N- to C-terminus: UPF0349 protein lin2491 (77 aa).

It belongs to the UPF0349 family.

The sequence is that of UPF0349 protein lin2491 from Listeria innocua serovar 6a (strain ATCC BAA-680 / CLIP 11262).